The sequence spans 169 residues: Large ribosomal subunit protein uL15 (169 aa).

Basic and acidic residues predominate over residues 1 to 13 (MKLNEIRDNEGAT). The interval 1–40 (MKLNEIRDNEGATKNRMRVGRGIGSGKGKTGGRGVKGQKA) is disordered. Residues 21 to 35 (RGIGSGKGKTGGRGV) show a composition bias toward gly residues.

Belongs to the universal ribosomal protein uL15 family. Part of the 50S ribosomal subunit.

Binds to the 23S rRNA. This Methylorubrum populi (strain ATCC BAA-705 / NCIMB 13946 / BJ001) (Methylobacterium populi) protein is Large ribosomal subunit protein uL15.